Reading from the N-terminus, the 344-residue chain is MLLFQKTLSRVAAPISVAANLILILLIIFKSPAQMGNYKYLLIGLSIFEMSYAVLDVVSETTVLSIKKSFVVVVPYKDRSFGQETAMDINLIYCGFFGFSMGMFVVIFAYRSFLTTGNTILRKFEGFKIISWFAYPLFYAIVWILVAWGPLASFPEMDIVVRPFLLDELNMTVDEVAYTGRLFYSTIDNSLRYSAILTGVLQWVLTASSLFLVIFFGLRCYFHYGKLVQLTDVQSIRLRQLQNQLFLALVCQATVPLILMHIPVTILYTCCVLNIVFNPFSVATTIALFPAIDPLPTIFIVKNYRVALFEFVCPSCLCWSETLKHMGSNRITSYRSNTVNALSM.

Residues 1–10 (MLLFQKTLSR) are Extracellular-facing. Residues 11-31 (VAAPISVAANLILILLIIFKS) traverse the membrane as a helical segment. At 32-39 (PAQMGNYK) the chain is on the cytoplasmic side. A helical transmembrane segment spans residues 40-60 (YLLIGLSIFEMSYAVLDVVSE). The Extracellular portion of the chain corresponds to 61–88 (TTVLSIKKSFVVVVPYKDRSFGQETAMD). The chain crosses the membrane as a helical span at residues 89–109 (INLIYCGFFGFSMGMFVVIFA). Residues 110 to 128 (YRSFLTTGNTILRKFEGFK) lie on the Cytoplasmic side of the membrane. A helical transmembrane segment spans residues 129–149 (IISWFAYPLFYAIVWILVAWG). At 150-195 (PLASFPEMDIVVRPFLLDELNMTVDEVAYTGRLFYSTIDNSLRYSA) the chain is on the extracellular side. A glycan (N-linked (GlcNAc...) asparagine) is linked at asparagine 170. A helical transmembrane segment spans residues 196 to 216 (ILTGVLQWVLTASSLFLVIFF). Residues 217–256 (GLRCYFHYGKLVQLTDVQSIRLRQLQNQLFLALVCQATVP) lie on the Cytoplasmic side of the membrane. The chain crosses the membrane as a helical span at residues 257-277 (LILMHIPVTILYTCCVLNIVF). The Extracellular portion of the chain corresponds to 278–279 (NP). A helical membrane pass occupies residues 280 to 300 (FSVATTIALFPAIDPLPTIFI). Residues 301–344 (VKNYRVALFEFVCPSCLCWSETLKHMGSNRITSYRSNTVNALSM) lie on the Cytoplasmic side of the membrane.

It belongs to the nematode receptor-like protein str family. In terms of tissue distribution, expressed in the ADL chemosensory neurons.

It is found in the cell membrane. Functionally, probable G-protein coupled receptor. This Caenorhabditis elegans protein is G-protein coupled receptor str-217.